The following is a 670-amino-acid chain: Solute carrier organic anion transporter family member 1A6 (670 aa).

Residues 1 to 20 (MGEPEKRAGTHGIRCFAKIK) lie on the Cytoplasmic side of the membrane. A helical transmembrane segment spans residues 21–40 (VFLLALTWAYASKALSATYM). Residues 41 to 59 (NSMLTQIERRFNISTSIVG) lie on the Extracellular side of the membrane. N-linked (GlcNAc...) asparagine glycosylation is present at asparagine 52. Residues 60–80 (LINGSFEVGNLLLIIFVSYFG) form a helical membrane-spanning segment. Residues 81–86 (RKRHRP) are Cytoplasmic-facing. Residues 87–111 (IMIGIGCAVMGLGCFIISLPHFLMG) form a helical membrane-spanning segment. Residues 112–155 (RYEYETTISPTSNLSSNSFLCMENRTQTLKPTQDPAECVKEMKS) lie on the Extracellular side of the membrane. Asparagine 124 and asparagine 135 each carry an N-linked (GlcNAc...) asparagine glycan. The chain crosses the membrane as a helical span at residues 156-184 (LMWIYVLVGNIIRGIGETPIMPLGISYIE). Residues 185-203 (DFAKSENSPFYIGILEVGK) are Cytoplasmic-facing. A helical membrane pass occupies residues 204 to 224 (ITGPIAAIWLGSFCATIYVDM). Over 225 to 242 (GSVNTDDLTITPTDTRCV) the chain is Extracellular. A helical transmembrane segment spans residues 243 to 267 (GAWWIGFLVCAGLNILISIPFFFFP). The Cytoplasmic portion of the chain corresponds to 268–311 (KTFPKEGPEDMANETKNDEGDKHREKAKEEKRGITKDFFLFMKS). The segment at 276–295 (EDMANETKNDEGDKHREKAK) is disordered. Residues 312-333 (LSCNPIYMLCVLTSVLQVNGFV) traverse the membrane as a helical segment. Over 334–353 (SIFTFKPKYLEHHYGKSSSE) the chain is Extracellular. The helical transmembrane segment at 354–377 (AIFLMGLYTLPSVCVGYLISGFIM) threads the bilayer. Topologically, residues 378–381 (KKFK) are cytoplasmic. Residues 382–405 (ITLKKAAFISYCLGMSECLLSLCN) form a helical membrane-spanning segment. Residues 406–513 (FMLTCDNVPI…PDCANKLQYF (108 aa)) lie on the Extracellular side of the membrane. A Kazal-like domain is found at 433–488 (NTVLADCNTRCSCLTKTWDPVCGDNGLAYITPCLAGCEKSVGSGINMVLQDCSCIQ). Intrachain disulfides connect cysteine 439–cysteine 469, cysteine 445–cysteine 465, and cysteine 454–cysteine 486. Residue asparagine 492 is glycosylated (N-linked (GlcNAc...) asparagine). Residues 514–536 (LIITVFCSFFYSLSLIPGYMIFL) form a helical membrane-spanning segment. At 537 to 545 (RCMKSEEKS) the chain is on the cytoplasmic side. The chain crosses the membrane as a helical span at residues 546–571 (LGIGLQAFCMRILGGILAPIYFGVLI). Residues 572–605 (DRTCLHWGTQKCGEPGACRTYEINSFRSIYLGLP) are Extracellular-facing. Residues 606-623 (AALRGSSYLPAFFILRLM) traverse the membrane as a helical segment. Topologically, residues 624–670 (RKFQFPGDINSPVTDHVEMMLTEKESEHTDVHRSPQVENDGELKTKL) are cytoplasmic. Position 634 is a phosphoserine (serine 634). Residues 647 to 670 (KESEHTDVHRSPQVENDGELKTKL) form a disordered region.

The protein belongs to the organo anion transporter (TC 2.A.60) family.

It localises to the cell membrane. Its function is as follows. May mediate the Na(+)-independent transport of organic anions. In Rattus norvegicus (Rat), this protein is Solute carrier organic anion transporter family member 1A6 (Slco1a6).